Consider the following 176-residue polypeptide: Large ribosomal subunit protein uL6 (176 aa).

This sequence belongs to the universal ribosomal protein uL6 family. In terms of assembly, part of the 50S ribosomal subunit.

In terms of biological role, this protein binds to the 23S rRNA, and is important in its secondary structure. It is located near the subunit interface in the base of the L7/L12 stalk, and near the tRNA binding site of the peptidyltransferase center. The chain is Large ribosomal subunit protein uL6 from Paraburkholderia xenovorans (strain LB400).